We begin with the raw amino-acid sequence, 65 residues long: Large ribosomal subunit protein bL35 (65 aa).

Residues 1–52 form a disordered region; that stretch reads MPKMKSNRAAAKRFKRTANGGFKSGNSFTSHRFHGKTKKQRRQLRGLSMMDK. Positions 31–44 are enriched in basic residues; sequence HRFHGKTKKQRRQL.

The protein belongs to the bacterial ribosomal protein bL35 family.

The protein is Large ribosomal subunit protein bL35 of Limosilactobacillus reuteri (strain DSM 20016) (Lactobacillus reuteri).